The primary structure comprises 285 residues: 2,3,4,5-tetrahydropyridine-2,6-dicarboxylate N-succinyltransferase (285 aa).

Substrate contacts are provided by Arg111 and Asp148.

This sequence belongs to the transferase hexapeptide repeat family. Homotrimer.

It is found in the cytoplasm. It carries out the reaction (S)-2,3,4,5-tetrahydrodipicolinate + succinyl-CoA + H2O = (S)-2-succinylamino-6-oxoheptanedioate + CoA. The protein operates within amino-acid biosynthesis; L-lysine biosynthesis via DAP pathway; LL-2,6-diaminopimelate from (S)-tetrahydrodipicolinate (succinylase route): step 1/3. The sequence is that of 2,3,4,5-tetrahydropyridine-2,6-dicarboxylate N-succinyltransferase from Allorhizobium ampelinum (strain ATCC BAA-846 / DSM 112012 / S4) (Agrobacterium vitis (strain S4)).